We begin with the raw amino-acid sequence, 354 residues long: Probable L-ascorbate-6-phosphate lactonase UlaG (354 aa).

This sequence belongs to the UlaG family. The cofactor is a divalent metal cation.

The protein resides in the cytoplasm. The enzyme catalyses L-ascorbate 6-phosphate + H2O = 3-dehydro-L-gulonate 6-phosphate. It participates in cofactor degradation; L-ascorbate degradation; D-xylulose 5-phosphate from L-ascorbate: step 1/4. In terms of biological role, probably catalyzes the hydrolysis of L-ascorbate-6-P into 3-keto-L-gulonate-6-P. Is essential for L-ascorbate utilization under anaerobic conditions. This is Probable L-ascorbate-6-phosphate lactonase UlaG from Salmonella agona (strain SL483).